A 123-amino-acid chain; its full sequence is Ribosome-binding factor A (123 aa).

This sequence belongs to the RbfA family. As to quaternary structure, monomer. Binds 30S ribosomal subunits, but not 50S ribosomal subunits or 70S ribosomes.

It localises to the cytoplasm. In terms of biological role, one of several proteins that assist in the late maturation steps of the functional core of the 30S ribosomal subunit. Associates with free 30S ribosomal subunits (but not with 30S subunits that are part of 70S ribosomes or polysomes). Required for efficient processing of 16S rRNA. May interact with the 5'-terminal helix region of 16S rRNA. This is Ribosome-binding factor A from Acetivibrio thermocellus (strain ATCC 27405 / DSM 1237 / JCM 9322 / NBRC 103400 / NCIMB 10682 / NRRL B-4536 / VPI 7372) (Clostridium thermocellum).